Consider the following 320-residue polypeptide: Elongation factor Ts (320 aa).

The interval T82–V85 is involved in Mg(2+) ion dislocation from EF-Tu.

Belongs to the EF-Ts family.

It is found in the cytoplasm. Associates with the EF-Tu.GDP complex and induces the exchange of GDP to GTP. It remains bound to the aminoacyl-tRNA.EF-Tu.GTP complex up to the GTP hydrolysis stage on the ribosome. The protein is Elongation factor Ts of Flavobacterium johnsoniae (strain ATCC 17061 / DSM 2064 / JCM 8514 / BCRC 14874 / CCUG 350202 / NBRC 14942 / NCIMB 11054 / UW101) (Cytophaga johnsonae).